Reading from the N-terminus, the 378-residue chain is Dual-specificity RNA methyltransferase RlmN (378 aa).

Catalysis depends on glutamate 97, which acts as the Proton acceptor. The Radical SAM core domain maps to 103-341; it reads EGDRATLCVS…VMVRKTRGDD (239 aa). Cysteine 110 and cysteine 346 are oxidised to a cystine. [4Fe-4S] cluster is bound by residues cysteine 117, cysteine 121, and cysteine 124. S-adenosyl-L-methionine is bound by residues 171-172, serine 203, 225-227, and asparagine 303; these read GE and SLH. The active-site S-methylcysteine intermediate is cysteine 346.

Belongs to the radical SAM superfamily. RlmN family. The cofactor is [4Fe-4S] cluster.

It localises to the cytoplasm. The catalysed reaction is adenosine(2503) in 23S rRNA + 2 reduced [2Fe-2S]-[ferredoxin] + 2 S-adenosyl-L-methionine = 2-methyladenosine(2503) in 23S rRNA + 5'-deoxyadenosine + L-methionine + 2 oxidized [2Fe-2S]-[ferredoxin] + S-adenosyl-L-homocysteine. The enzyme catalyses adenosine(37) in tRNA + 2 reduced [2Fe-2S]-[ferredoxin] + 2 S-adenosyl-L-methionine = 2-methyladenosine(37) in tRNA + 5'-deoxyadenosine + L-methionine + 2 oxidized [2Fe-2S]-[ferredoxin] + S-adenosyl-L-homocysteine. In terms of biological role, specifically methylates position 2 of adenine 2503 in 23S rRNA and position 2 of adenine 37 in tRNAs. m2A2503 modification seems to play a crucial role in the proofreading step occurring at the peptidyl transferase center and thus would serve to optimize ribosomal fidelity. This Idiomarina loihiensis (strain ATCC BAA-735 / DSM 15497 / L2-TR) protein is Dual-specificity RNA methyltransferase RlmN.